Reading from the N-terminus, the 325-residue chain is Chain length determinant protein (325 aa).

The Cytoplasmic portion of the chain corresponds to M1 to K31. The helical transmembrane segment at M32–A52 threads the bilayer. The Periplasmic segment spans residues K53 to K294. Residues A295–G315 traverse the membrane as a helical segment. The Cytoplasmic segment spans residues R316–K325.

Belongs to the WzzB/Cld/Rol family.

Its subcellular location is the cell inner membrane. The protein operates within bacterial outer membrane biogenesis; lipopolysaccharide biosynthesis. In terms of biological role, confers a modal distribution of chain length on the O-antigen component of lipopolysaccharide (LPS). Gives rise to a reduced number of short chain molecules and increases in numbers of longer molecules, with a modal value of 13 (in strain O111/M92) and of 17 (in strain K12). In Escherichia coli, this protein is Chain length determinant protein (wzzB).